The chain runs to 31 residues: Cytochrome b6-f complex subunit 6 (31 aa).

The chain crosses the membrane as a helical span at residues 4-24 (ITSYFGFLLAALTITSVLFIG).

This sequence belongs to the PetL family. As to quaternary structure, the 4 large subunits of the cytochrome b6-f complex are cytochrome b6, subunit IV (17 kDa polypeptide, PetD), cytochrome f and the Rieske protein, while the 4 small subunits are PetG, PetL, PetM and PetN. The complex functions as a dimer.

The protein localises to the plastid. Its subcellular location is the chloroplast thylakoid membrane. Its function is as follows. Component of the cytochrome b6-f complex, which mediates electron transfer between photosystem II (PSII) and photosystem I (PSI), cyclic electron flow around PSI, and state transitions. PetL is important for photoautotrophic growth as well as for electron transfer efficiency and stability of the cytochrome b6-f complex. The polypeptide is Cytochrome b6-f complex subunit 6 (Nandina domestica (Heavenly bamboo)).